A 172-amino-acid polypeptide reads, in one-letter code: uncharacterized protein (172 aa).

The PfpI endopeptidase domain maps to 3 to 171; it reads KKVAIILADE…FNREIVKKLE (169 aa).

This sequence belongs to the peptidase C56 family.

This is an uncharacterized protein from Staphylococcus epidermidis (strain ATCC 35984 / DSM 28319 / BCRC 17069 / CCUG 31568 / BM 3577 / RP62A).